We begin with the raw amino-acid sequence, 179 residues long: Large ribosomal subunit protein uL5 (179 aa).

This sequence belongs to the universal ribosomal protein uL5 family. Part of the 50S ribosomal subunit; part of the 5S rRNA/L5/L18/L25 subcomplex. Contacts the 5S rRNA and the P site tRNA. Forms a bridge to the 30S subunit in the 70S ribosome.

Its function is as follows. This is one of the proteins that bind and probably mediate the attachment of the 5S RNA into the large ribosomal subunit, where it forms part of the central protuberance. In the 70S ribosome it contacts protein S13 of the 30S subunit (bridge B1b), connecting the 2 subunits; this bridge is implicated in subunit movement. Contacts the P site tRNA; the 5S rRNA and some of its associated proteins might help stabilize positioning of ribosome-bound tRNAs. The chain is Large ribosomal subunit protein uL5 from Burkholderia ambifaria (strain MC40-6).